The following is a 455-amino-acid chain: Ribosomal protein uS12 methylthiotransferase RimO (455 aa).

The MTTase N-terminal domain maps to 30–140; the sequence is PTIGMVSLGC…VLDAVHGAVP (111 aa). Cys39, Cys75, Cys104, Cys171, Cys175, and Cys178 together coordinate [4Fe-4S] cluster. Residues 157–386 form the Radical SAM core domain; that stretch reads LTPRHFSYLK…MEKAQAISEA (230 aa). In terms of domain architecture, TRAM spans 389–455; it reads AAKVGRRIEV…GEYDLWGRPV (67 aa).

The protein belongs to the methylthiotransferase family. RimO subfamily. [4Fe-4S] cluster serves as cofactor.

It localises to the cytoplasm. It carries out the reaction L-aspartate(89)-[ribosomal protein uS12]-hydrogen + (sulfur carrier)-SH + AH2 + 2 S-adenosyl-L-methionine = 3-methylsulfanyl-L-aspartate(89)-[ribosomal protein uS12]-hydrogen + (sulfur carrier)-H + 5'-deoxyadenosine + L-methionine + A + S-adenosyl-L-homocysteine + 2 H(+). Functionally, catalyzes the methylthiolation of an aspartic acid residue of ribosomal protein uS12. The sequence is that of Ribosomal protein uS12 methylthiotransferase RimO from Cereibacter sphaeroides (strain ATCC 17029 / ATH 2.4.9) (Rhodobacter sphaeroides).